The following is a 320-amino-acid chain: MSWIEKILNKSNITSSRKANIPEGVWTKCDSCGQVLYRAELERNLEVCPKCDHHMRISARRRLETFLDTGSTTELGSELEPKDILKFRDSKKYKDRIAAAQKQTHEKDALVVMKGTLKEMPVVAASFEFAFMGGSMASVVGARFVRAVEQALEDNCPLICFSASGGARMQEALMSLMQMAKTSAALAKMQERGLPYISVMTDPTMGGVSASLAMLGDINVAEPKALIGFAGPRVIEQTVREKLPAGFQRSEFLLEKGAIDMIVRRPEMRDELAELLAKLTQYDLAKDEDELLGEEMIADDIESSDNEPEINIETNKKEDV.

A CoA carboxyltransferase N-terminal domain is found at 25–294 (VWTKCDSCGQ…AKDEDELLGE (270 aa)). Residues cysteine 29, cysteine 32, cysteine 48, and cysteine 51 each contribute to the Zn(2+) site. The segment at 29–51 (CDSCGQVLYRAELERNLEVCPKC) adopts a C4-type zinc-finger fold. The span at 295–310 (EMIADDIESSDNEPEI) shows a compositional bias: acidic residues. Residues 295–320 (EMIADDIESSDNEPEINIETNKKEDV) are disordered.

This sequence belongs to the AccD/PCCB family. In terms of assembly, acetyl-CoA carboxylase is a heterohexamer composed of biotin carboxyl carrier protein (AccB), biotin carboxylase (AccC) and two subunits each of ACCase subunit alpha (AccA) and ACCase subunit beta (AccD). The cofactor is Zn(2+).

The protein resides in the cytoplasm. The enzyme catalyses N(6)-carboxybiotinyl-L-lysyl-[protein] + acetyl-CoA = N(6)-biotinyl-L-lysyl-[protein] + malonyl-CoA. The protein operates within lipid metabolism; malonyl-CoA biosynthesis; malonyl-CoA from acetyl-CoA: step 1/1. Functionally, component of the acetyl coenzyme A carboxylase (ACC) complex. Biotin carboxylase (BC) catalyzes the carboxylation of biotin on its carrier protein (BCCP) and then the CO(2) group is transferred by the transcarboxylase to acetyl-CoA to form malonyl-CoA. The sequence is that of Acetyl-coenzyme A carboxylase carboxyl transferase subunit beta from Proteus mirabilis (strain HI4320).